Reading from the N-terminus, the 85-residue chain is Phosphocarrier protein HPr (85 aa).

The HPr domain occupies 1-85; that stretch reads MFQNQVKITA…HLSLIMTELE (85 aa). The Pros-phosphohistidine intermediate role is filled by His-15.

Belongs to the HPr family.

Its subcellular location is the cytoplasm. Its function is as follows. General (non sugar-specific) component of the phosphoenolpyruvate-dependent sugar phosphotransferase system (sugar PTS). This major carbohydrate active-transport system catalyzes the phosphorylation of incoming sugar substrates concomitantly with their translocation across the cell membrane. The phosphoryl group from phosphoenolpyruvate (PEP) is transferred to the phosphoryl carrier protein HPr by enzyme I. Phospho-HPr then transfers it to the PTS EIIA domain. The chain is Phosphocarrier protein HPr (ptsH) from Buchnera aphidicola subsp. Acyrthosiphon pisum (strain APS) (Acyrthosiphon pisum symbiotic bacterium).